A 257-amino-acid polypeptide reads, in one-letter code: Aspartate/glutamate leucyltransferase (257 aa).

This sequence belongs to the R-transferase family. Bpt subfamily.

The protein localises to the cytoplasm. The enzyme catalyses N-terminal L-glutamyl-[protein] + L-leucyl-tRNA(Leu) = N-terminal L-leucyl-L-glutamyl-[protein] + tRNA(Leu) + H(+). The catalysed reaction is N-terminal L-aspartyl-[protein] + L-leucyl-tRNA(Leu) = N-terminal L-leucyl-L-aspartyl-[protein] + tRNA(Leu) + H(+). In terms of biological role, functions in the N-end rule pathway of protein degradation where it conjugates Leu from its aminoacyl-tRNA to the N-termini of proteins containing an N-terminal aspartate or glutamate. The protein is Aspartate/glutamate leucyltransferase of Nitrobacter winogradskyi (strain ATCC 25391 / DSM 10237 / CIP 104748 / NCIMB 11846 / Nb-255).